A 204-amino-acid polypeptide reads, in one-letter code: GTP cyclohydrolase 1 (204 aa).

Residues C92, H95, and C165 each coordinate Zn(2+).

The protein belongs to the GTP cyclohydrolase I family. In terms of assembly, homomer.

It catalyses the reaction GTP + H2O = 7,8-dihydroneopterin 3'-triphosphate + formate + H(+). It functions in the pathway cofactor biosynthesis; 7,8-dihydroneopterin triphosphate biosynthesis; 7,8-dihydroneopterin triphosphate from GTP: step 1/1. The chain is GTP cyclohydrolase 1 from Mycolicibacterium paratuberculosis (strain ATCC BAA-968 / K-10) (Mycobacterium paratuberculosis).